We begin with the raw amino-acid sequence, 225 residues long: Uridine kinase (225 aa).

ATP is bound at residue 12 to 19 (GGTGAGKT).

Belongs to the uridine kinase family.

The protein resides in the cytoplasm. The catalysed reaction is uridine + ATP = UMP + ADP + H(+). It carries out the reaction cytidine + ATP = CMP + ADP + H(+). Its pathway is pyrimidine metabolism; CTP biosynthesis via salvage pathway; CTP from cytidine: step 1/3. It functions in the pathway pyrimidine metabolism; UMP biosynthesis via salvage pathway; UMP from uridine: step 1/1. The sequence is that of Uridine kinase from Halobacterium salinarum (strain ATCC 700922 / JCM 11081 / NRC-1) (Halobacterium halobium).